The sequence spans 348 residues: Phenylalanine--tRNA ligase alpha subunit (348 aa).

Glu259 provides a ligand contact to Mg(2+).

This sequence belongs to the class-II aminoacyl-tRNA synthetase family. Phe-tRNA synthetase alpha subunit type 1 subfamily. In terms of assembly, tetramer of two alpha and two beta subunits. Mg(2+) serves as cofactor.

It localises to the cytoplasm. The catalysed reaction is tRNA(Phe) + L-phenylalanine + ATP = L-phenylalanyl-tRNA(Phe) + AMP + diphosphate + H(+). The polypeptide is Phenylalanine--tRNA ligase alpha subunit (Enterococcus faecalis (strain ATCC 700802 / V583)).